An 89-amino-acid polypeptide reads, in one-letter code: Small ribosomal subunit protein uS15 (89 aa).

The interval 1–23 (MSLGTEEKQNLINTHQVHPTDTG) is disordered. Over residues 10 to 23 (NLINTHQVHPTDTG) the composition is skewed to polar residues.

The protein belongs to the universal ribosomal protein uS15 family. In terms of assembly, part of the 30S ribosomal subunit. Forms a bridge to the 50S subunit in the 70S ribosome, contacting the 23S rRNA.

Functionally, one of the primary rRNA binding proteins, it binds directly to 16S rRNA where it helps nucleate assembly of the platform of the 30S subunit by binding and bridging several RNA helices of the 16S rRNA. Forms an intersubunit bridge (bridge B4) with the 23S rRNA of the 50S subunit in the ribosome. This chain is Small ribosomal subunit protein uS15, found in Prochlorococcus marinus (strain NATL2A).